Here is a 387-residue protein sequence, read N- to C-terminus: Succinate--CoA ligase [ADP-forming] subunit beta (387 aa).

The region spanning 9-236 is the ATP-grasp domain; the sequence is KELFAKHNVP…RDATDPLELK (228 aa). ATP-binding positions include Lys45, 52 to 54, Ser94, and Glu99; that span reads GRG. Mg(2+) is bound by residues Asn191 and Asp205. Residues Asn256 and 318–320 contribute to the substrate site; that span reads GIT.

It belongs to the succinate/malate CoA ligase beta subunit family. In terms of assembly, heterotetramer of two alpha and two beta subunits. Mg(2+) serves as cofactor.

It catalyses the reaction succinate + ATP + CoA = succinyl-CoA + ADP + phosphate. The enzyme catalyses GTP + succinate + CoA = succinyl-CoA + GDP + phosphate. It participates in carbohydrate metabolism; tricarboxylic acid cycle; succinate from succinyl-CoA (ligase route): step 1/1. Succinyl-CoA synthetase functions in the citric acid cycle (TCA), coupling the hydrolysis of succinyl-CoA to the synthesis of either ATP or GTP and thus represents the only step of substrate-level phosphorylation in the TCA. The beta subunit provides nucleotide specificity of the enzyme and binds the substrate succinate, while the binding sites for coenzyme A and phosphate are found in the alpha subunit. The chain is Succinate--CoA ligase [ADP-forming] subunit beta from Mycolicibacterium smegmatis (strain ATCC 700084 / mc(2)155) (Mycobacterium smegmatis).